The following is a 553-amino-acid chain: Zinc finger protein with KRAB and SCAN domains 3 (553 aa).

The segment at 28-49 (EQEESSPLAEETSWLGSPGPDR) is disordered. 2 positions are modified to phosphoserine: serine 33 and serine 44. One can recognise an SCAN box domain in the interval 51-133 (RQRFRAFRYP…ALLEYLDRQL (83 aa)). Threonine 136 is modified (phosphothreonine). A Glycyl lysine isopeptide (Lys-Gly) (interchain with G-Cter in SUMO2) cross-link involves residue lysine 176. Threonine 206 carries the phosphothreonine modification. The region spanning 213–273 (LKMEDVAPVL…RAEEYRDQKP (61 aa)) is the KRAB domain. The residue at position 223 (serine 223) is a Phosphoserine. 5 consecutive C2H2-type zinc fingers follow at residues 313–335 (FYCR…KRIH), 341–363 (YECE…QRVH), 369–391 (YECE…QRTH), 397–419 (YECD…HRIH), and 425–447 (YQCN…QRTH). Threonine 448 is subject to Phosphothreonine. C2H2-type zinc fingers lie at residues 479–501 (YQCN…QKVH) and 507–529 (FECQ…QRRH).

Belongs to the krueppel C2H2-type zinc-finger protein family. Expressed in heart, brain, spleen, lung, liver, skeletal muscle, kidney and testis.

It localises to the nucleus. Its subcellular location is the cytoplasm. Transcriptional factor that binds to the consensus sequence 5'-[GT][AG][AGT]GGGG-3' and acts as a repressor of autophagy. Specifically represses expression of genes involved in autophagy and lysosome biogenesis/function such as MAP1LC3B, ULK1 or WIPI2. Associates with chromatin at the ITGB4 and VEGF promoters. In Mus musculus (Mouse), this protein is Zinc finger protein with KRAB and SCAN domains 3 (Zkscan3).